The sequence spans 380 residues: Epoxyqueuosine reductase (380 aa).

The active-site Proton donor is aspartate 134. A 4Fe-4S ferredoxin-type 1 domain is found at 179–208; sequence PPDQPIEDQCGSCTKCIDICPTGALIQGGQ. The [4Fe-4S] cluster site is built by cysteine 188, cysteine 191, cysteine 194, cysteine 198, cysteine 214, cysteine 240, cysteine 243, and cysteine 247. The 4Fe-4S ferredoxin-type 2 domain maps to 226-258; sequence PEEYRDKIGNRIYGCDTCQTVCPKNKGMDFHNH.

It belongs to the QueG family. As to quaternary structure, monomer. Requires cob(II)alamin as cofactor. [4Fe-4S] cluster is required as a cofactor.

Its subcellular location is the cytoplasm. The catalysed reaction is epoxyqueuosine(34) in tRNA + AH2 = queuosine(34) in tRNA + A + H2O. Its pathway is tRNA modification; tRNA-queuosine biosynthesis. Its function is as follows. Catalyzes the conversion of epoxyqueuosine (oQ) to queuosine (Q), which is a hypermodified base found in the wobble positions of tRNA(Asp), tRNA(Asn), tRNA(His) and tRNA(Tyr). The sequence is that of Epoxyqueuosine reductase from Bacillus anthracis.